Consider the following 316-residue polypeptide: Transaldolase 2 (316 aa).

The Schiff-base intermediate with substrate role is filled by lysine 131.

The protein belongs to the transaldolase family. Type 1 subfamily. In terms of assembly, homodimer.

It localises to the cytoplasm. The enzyme catalyses D-sedoheptulose 7-phosphate + D-glyceraldehyde 3-phosphate = D-erythrose 4-phosphate + beta-D-fructose 6-phosphate. Its pathway is carbohydrate degradation; pentose phosphate pathway; D-glyceraldehyde 3-phosphate and beta-D-fructose 6-phosphate from D-ribose 5-phosphate and D-xylulose 5-phosphate (non-oxidative stage): step 2/3. Functionally, transaldolase is important for the balance of metabolites in the pentose-phosphate pathway. The polypeptide is Transaldolase 2 (Shigella sonnei (strain Ss046)).